Here is a 614-residue protein sequence, read N- to C-terminus: Zinc metalloproteinase dpy-31 (614 aa).

The signal sequence occupies residues 1 to 24; it reads MSLLRCTTLLLVVVAIALPPCILG. The propeptide occupies 25–150; the sequence is YSLHDGSRLD…KTGQRRVKRK (126 aa). Residues 150 to 349 enclose the Peptidase M12A domain; sequence KFIGSDLRRW…IRLMNKIYCS (200 aa). A glycan (N-linked (GlcNAc...) asparagine) is linked at N190. 5 disulfides stabilise this stretch: C193-C348, C216-C237, C352-C372, C374-C383, and C394-C422. H245 is a binding site for Zn(2+). E246 is a catalytic residue. Zn(2+) contacts are provided by H249 and H255. An EGF-like domain is found at 344–384; it reads NKIYCSNVCSRKLPCQRGGYTDPRRCDRCRCPDGFTGQFCE. Positions 394-510 constitute a CUB domain; it reads CGGRIQVNGG…RGFEARARAL (117 aa). N461 carries an N-linked (GlcNAc...) asparagine glycan. Residues 513 to 562 form the TSP type-1 domain; that stretch reads NGQWASWSPWTPCTASCGACGSRMRTRVCSHGACAGEPVENQVCNTHPCN. 3 disulfide bridges follow: C525–C556, C529–C561, and C541–C546.

Requires Zn(2+) as cofactor.

The protein resides in the secreted. Its activity is regulated as follows. Inhibited by marimastat and tripeptide hydroxamic acids. Inhibited by 1,10-phenanthroline. Its function is as follows. Metalloprotease which cleaves the carboxyl terminus of procollagens to mature collagens. Probably involved in cuticular collagen maturation. The polypeptide is Zinc metalloproteinase dpy-31 (Teladorsagia circumcincta (Brown stomach worm)).